An 86-amino-acid chain; its full sequence is MYCIELTIKLSPMPLVVQRKEHGEAKRLYSDVVGSIENGNPRLLELTCEKVEDKRITVLVSEITAVQIYEKTSSSTSKRPGFSLQN.

It belongs to the UPF0367 family.

This is UPF0367 protein PMN2A_1492 from Prochlorococcus marinus (strain NATL2A).